Consider the following 885-residue polypeptide: Alanine--tRNA ligase (885 aa).

Positions 426–444 (QEQKTRARQDRREKQRGGA) are enriched in basic and acidic residues. The tract at residues 426–445 (QEQKTRARQDRREKQRGGAE) is disordered. Zn(2+)-binding residues include His-568, His-572, Cys-671, and His-675.

This sequence belongs to the class-II aminoacyl-tRNA synthetase family. Requires Zn(2+) as cofactor.

The protein resides in the cytoplasm. The enzyme catalyses tRNA(Ala) + L-alanine + ATP = L-alanyl-tRNA(Ala) + AMP + diphosphate. Functionally, catalyzes the attachment of alanine to tRNA(Ala) in a two-step reaction: alanine is first activated by ATP to form Ala-AMP and then transferred to the acceptor end of tRNA(Ala). Also edits incorrectly charged Ser-tRNA(Ala) and Gly-tRNA(Ala) via its editing domain. This Chlorobium phaeovibrioides (strain DSM 265 / 1930) (Prosthecochloris vibrioformis (strain DSM 265)) protein is Alanine--tRNA ligase.